The chain runs to 150 residues: Urease accessory protein UreE (150 aa).

This sequence belongs to the UreE family.

The protein resides in the cytoplasm. In terms of biological role, involved in urease metallocenter assembly. Binds nickel. Probably functions as a nickel donor during metallocenter assembly. The protein is Urease accessory protein UreE of Streptococcus vestibularis.